Here is a 429-residue protein sequence, read N- to C-terminus: Histidine--tRNA ligase (429 aa).

Belongs to the class-II aminoacyl-tRNA synthetase family. As to quaternary structure, homodimer.

Its subcellular location is the cytoplasm. The enzyme catalyses tRNA(His) + L-histidine + ATP = L-histidyl-tRNA(His) + AMP + diphosphate + H(+). The chain is Histidine--tRNA ligase from Pseudomonas paraeruginosa (strain DSM 24068 / PA7) (Pseudomonas aeruginosa (strain PA7)).